A 528-amino-acid polypeptide reads, in one-letter code: Autophagy-related protein 22 (528 aa).

The Cytoplasmic segment spans residues 1 to 98 (MSYGTINDMN…IFVDTSSFAL (98 aa)). Residues 99 to 119 (YVFSLSVLFQTIIVISVSGIV) traverse the membrane as a helical segment. At 120–130 (DLWGSVKFKGR) the chain is on the vacuolar side. The helical transmembrane segment at 131–151 (ILVWFGIVGALSTVAISKLND) threads the bilayer. Residues 152-153 (TQ) are Cytoplasmic-facing. The helical transmembrane segment at 154–174 (IYSLAGLYIVANGCFGVINVV) threads the bilayer. Over 175-210 (GNSLLPIFVKDSLKCQSQGAYEPDKVDSLTTVISGR) the chain is Vacuolar. Residues 211-231 (GASLGYSSALIVQIVSMFLVA) form a helical membrane-spanning segment. Residues 232–241 (SKKGSKQDVQ) lie on the Cytoplasmic side of the membrane. A helical transmembrane segment spans residues 242 to 262 (VAVLFVGIWWFVWQLPMIWLI). Topologically, residues 263 to 318 (DDVTIPIRVDDSTLASARSPYPGEQDALGQLNWKNYLSYGWVSLFESFKHARLLKD) are vacuolar. Ser-278 carries the post-translational modification Phosphoserine. Residues 319-339 (VMIFLIAWFIISDSITTINST) traverse the membrane as a helical segment. The Cytoplasmic segment spans residues 340-352 (AVLFSKAELHMST). The helical transmembrane segment at 353 to 373 (LNLIMISVLTVVNAMLGAFMI) threads the bilayer. Residues 374-388 (PQFLATKFRWTSSQT) lie on the Vacuolar side of the membrane. A helical transmembrane segment spans residues 389-409 (LMYIIIWASFIPFYGILGFFF). The Cytoplasmic segment spans residues 410-417 (NAFGLKHK). The helical transmembrane segment at 418 to 438 (FEMFLLAIWYGLSLGGLSAVS) threads the bilayer. Over 439-485 (RSVFSLIVPPGKESTFFSMFSITDKGSSILGPFLVGLLTDKTHNIRY) the chain is Vacuolar. The chain crosses the membrane as a helical span at residues 486 to 506 (SFYFFFLLLMLSLPVLNCLDV). The Cytoplasmic portion of the chain corresponds to 507–528 (KRGRREAEELSQVLPESERRLD).

Belongs to the ATG22 family.

It is found in the vacuole membrane. Its function is as follows. Vacuolar effluxer which mediate the efflux of leucine and other amino acids resulting from autophagic degradation. The release of autophagic amino acids allows the maintenance of protein synthesis and viability during nitrogen starvation. In Saccharomyces cerevisiae (strain ATCC 204508 / S288c) (Baker's yeast), this protein is Autophagy-related protein 22 (ATG22).